The sequence spans 639 residues: Methyl-accepting chemotaxis protein McpS (639 aa).

Topologically, residues 1–13 (MNSWFANISVNLK) are cytoplasmic. A helical membrane pass occupies residues 14 to 34 (LGLGFGLVLVLTGLLALTGWT). The Periplasmic portion of the chain corresponds to 35 to 288 (SLGSLIDRSN…RDIESTQARS (254 aa)). An HBM domain is found at 41–283 (DRSNWMGDIG…IQLERRDIES (243 aa)). 60–65 (RIARLQ) lines the (S)-malate pocket. 60 to 65 (RIARLQ) lines the succinate pocket. Acetate is bound by residues aspartate 138, arginine 183, arginine 187, and tyrosine 236. Residues 191 to 245 (AENSSANEQAALRQLDAALADTDNLKRQLPSEDARLQQFENAVLAYRDAVRQFRD) are a coiled coil. 2 residues coordinate (S)-malate: arginine 254 and threonine 258. Arginine 254 provides a ligand contact to succinate. The chain crosses the membrane as a helical span at residues 289–309 (LQAIATLLALLVGVLAAVLIT). Residues 310–362 (RQITRPLQDTLVAVEKIASGDLTQHMRVTRRDELGVLQQGIARMGTTLRELIS) form the HAMP domain. The Cytoplasmic segment spans residues 310-639 (RQITRPLQDT…LQTLVSQFRV (330 aa)). The 237-residue stretch at 367 to 603 (GVTQIASAAE…EISRSILNVR (237 aa)) folds into the Methyl-accepting transducer domain.

The protein belongs to the methyl-accepting chemotaxis (MCP) protein family. In terms of assembly, homodimer. Exists as a mixture of monomers and dimers in solution. Ligand binding stabilizes the dimeric form. In terms of processing, methylated by CheR2.

The protein resides in the cell membrane. With respect to regulation, binding of citrate to the ligand-binding domain reduces the chemotaxis towards the strong attractants such as malate and succinate. However, in physiologically relevant niches, citrate is mostly complexed with magnesium or calcium ions, and does not bind McpS. Functionally, chemotactic-signal transducers respond to changes in the concentration of attractants and repellents in the environment, transduce a signal from the outside to the inside of the cell, and facilitate sensory adaptation through the variation of the level of methylation. McpS is a specific chemoreceptor for 6 tricarboxylic acid (TCA) cycle intermediates (succinate, fumarate, malate, oxaloacetate, citrate and isocitrate), butyrate and acetate. Malate, succinate, fumarate and oxaloacetate cause the strongest chemotactic response. The chain is Methyl-accepting chemotaxis protein McpS (mcpS) from Pseudomonas putida (strain ATCC 47054 / DSM 6125 / CFBP 8728 / NCIMB 11950 / KT2440).